The primary structure comprises 133 residues: Histone H2A.1 (133 aa).

Residues 1-23 (MSTTGKGGKAKGKTASSKQVSRS) form a disordered region. S2 carries the post-translational modification N-acetylserine. K6, K9, K11, K13, and K18 each carry N6-acetyllysine. Residue S123 is modified to Phosphoserine. Residue K124 forms a Glycyl lysine isopeptide (Lys-Gly) (interchain with G-Cter in ubiquitin) linkage.

This sequence belongs to the histone H2A family. The nucleosome is a histone octamer containing two molecules each of H2A, H2B, H3 and H4 assembled in one H3-H4 heterotetramer and two H2A-H2B heterodimers. The octamer wraps approximately 147 bp of DNA. Post-translationally, monoubiquitination of Lys-124 gives a specific tag for epigenetic transcriptional repression. In terms of processing, acetylation occurs almost exclusively in the MAC.

Its subcellular location is the nucleus. The protein localises to the chromosome. Functionally, core component of nucleosome. Nucleosomes wrap and compact DNA into chromatin, limiting DNA accessibility to the cellular machineries which require DNA as a template. Histones thereby play a central role in transcription regulation, DNA repair, DNA replication and chromosomal stability. DNA accessibility is regulated via a complex set of post-translational modifications of histones, also called histone code, and nucleosome remodeling. The chain is Histone H2A.1 (HTA2) from Tetrahymena thermophila (strain SB210).